A 432-amino-acid polypeptide reads, in one-letter code: 3-phosphoshikimate 1-carboxyvinyltransferase (432 aa).

3-phosphoshikimate is bound by residues Lys-21, Ser-22, and Arg-26. Lys-21 is a binding site for phosphoenolpyruvate. Gly-93 and Arg-121 together coordinate phosphoenolpyruvate. Ser-166, Gln-168, Asp-318, and Lys-345 together coordinate 3-phosphoshikimate. Gln-168 lines the phosphoenolpyruvate pocket. Residue Asp-318 is the Proton acceptor of the active site. Phosphoenolpyruvate-binding residues include Arg-349 and Arg-391.

It belongs to the EPSP synthase family. Monomer.

The protein resides in the cytoplasm. The enzyme catalyses 3-phosphoshikimate + phosphoenolpyruvate = 5-O-(1-carboxyvinyl)-3-phosphoshikimate + phosphate. It participates in metabolic intermediate biosynthesis; chorismate biosynthesis; chorismate from D-erythrose 4-phosphate and phosphoenolpyruvate: step 6/7. In terms of biological role, catalyzes the transfer of the enolpyruvyl moiety of phosphoenolpyruvate (PEP) to the 5-hydroxyl of shikimate-3-phosphate (S3P) to produce enolpyruvyl shikimate-3-phosphate and inorganic phosphate. In Persephonella marina (strain DSM 14350 / EX-H1), this protein is 3-phosphoshikimate 1-carboxyvinyltransferase.